Consider the following 146-residue polypeptide: Anti-sigma F factor (146 aa).

It belongs to the anti-sigma-factor family.

The catalysed reaction is L-seryl-[protein] + ATP = O-phospho-L-seryl-[protein] + ADP + H(+). It carries out the reaction L-threonyl-[protein] + ATP = O-phospho-L-threonyl-[protein] + ADP + H(+). In terms of biological role, binds to sigma F and blocks its ability to form an RNA polymerase holoenzyme (E-sigma F). Phosphorylates SpoIIAA on a serine residue. This phosphorylation may enable SpoIIAA to act as an anti-anti-sigma factor that counteracts SpoIIAB and thus releases sigma F from inhibition. The sequence is that of Anti-sigma F factor from Bacillus velezensis (strain DSM 23117 / BGSC 10A6 / LMG 26770 / FZB42) (Bacillus amyloliquefaciens subsp. plantarum).